The sequence spans 203 residues: Excretory canal abnormal exc-13 (203 aa).

A signal peptide spans 1–20 (MIGFLKFALIGTVLLGVANG). N-linked (GlcNAc...) asparagine glycosylation is found at asparagine 32, asparagine 84, and asparagine 188.

Belongs to the UPF0376 family.

The protein resides in the secreted. This chain is Excretory canal abnormal exc-13, found in Caenorhabditis elegans.